The sequence spans 348 residues: Dihydroorotase (348 aa).

Residues H17 and H19 each coordinate Zn(2+). Residues 19-21 (HLR) and N45 each bind substrate. Zn(2+) is bound by residues K103, H140, and H178. Position 103 is an N6-carboxylysine (K103). Residue H140 coordinates substrate. Position 223 (L223) interacts with substrate. D251 is a Zn(2+) binding site. The active site involves D251. Substrate-binding residues include H255 and A267.

It belongs to the metallo-dependent hydrolases superfamily. DHOase family. Class II DHOase subfamily. In terms of assembly, homodimer. Zn(2+) serves as cofactor.

It carries out the reaction (S)-dihydroorotate + H2O = N-carbamoyl-L-aspartate + H(+). Its pathway is pyrimidine metabolism; UMP biosynthesis via de novo pathway; (S)-dihydroorotate from bicarbonate: step 3/3. Its function is as follows. Catalyzes the reversible cyclization of carbamoyl aspartate to dihydroorotate. This Escherichia coli O17:K52:H18 (strain UMN026 / ExPEC) protein is Dihydroorotase.